A 678-amino-acid polypeptide reads, in one-letter code: NADPH--cytochrome P450 reductase (678 aa).

Residues Met-1–Ser-21 lie on the Lumenal side of the membrane. Residues Leu-22–Phe-42 traverse the membrane as a helical segment. The Cytoplasmic segment spans residues Leu-43–Ser-678. Ser-63 is subject to Phosphoserine. Positions Ile-80–Trp-224 constitute a Flavodoxin-like domain. FMN is bound by residues Ser-86–Ala-91, Ala-138–Gly-141, Leu-173–Asn-182, and Asp-208. Positions Lys-279–Pro-521 constitute an FAD-binding FR-type domain. NADP(+) is bound at residue Arg-298. FAD contacts are provided by residues Arg-424, Arg-454 to Ser-457, Cys-472 to Val-474, Tyr-478, and Gly-488 to Thr-491. Residues Thr-535, Ser-596–Arg-597, Lys-602–Gln-606, and Asp-639 each bind NADP(+). Trp-677 contributes to the FAD binding site.

This sequence belongs to the NADPH--cytochrome P450 reductase family. It in the N-terminal section; belongs to the flavodoxin family. In the C-terminal section; belongs to the flavoprotein pyridine nucleotide cytochrome reductase family. Requires FAD as cofactor. The cofactor is FMN.

The protein localises to the endoplasmic reticulum membrane. The catalysed reaction is 2 oxidized [cytochrome P450] + NADPH = 2 reduced [cytochrome P450] + NADP(+) + H(+). Its function is as follows. This enzyme is required for electron transfer from NADP to cytochrome P450 in microsomes. It can also provide electron transfer to heme oxygenase and cytochrome B5. This is NADPH--cytochrome P450 reductase from Bos taurus (Bovine).